The primary structure comprises 338 residues: D-erythrose-4-phosphate dehydrogenase (338 aa).

Residue 11–12 (RI) coordinates NAD(+). Residues 153 to 155 (SCT), Arg199, 212 to 213 (TK), and Arg235 each bind substrate. Cys154 serves as the catalytic Nucleophile. Asn317 serves as a coordination point for NAD(+).

It belongs to the glyceraldehyde-3-phosphate dehydrogenase family. Epd subfamily. As to quaternary structure, homotetramer.

The protein localises to the cytoplasm. The enzyme catalyses D-erythrose 4-phosphate + NAD(+) + H2O = 4-phospho-D-erythronate + NADH + 2 H(+). It functions in the pathway cofactor biosynthesis; pyridoxine 5'-phosphate biosynthesis; pyridoxine 5'-phosphate from D-erythrose 4-phosphate: step 1/5. In terms of biological role, catalyzes the NAD-dependent conversion of D-erythrose 4-phosphate to 4-phosphoerythronate. The protein is D-erythrose-4-phosphate dehydrogenase of Shewanella loihica (strain ATCC BAA-1088 / PV-4).